Reading from the N-terminus, the 535-residue chain is Lecithin-cholesterol acyltransferase-like 4 (535 aa).

Ser2 carries the N-acetylserine modification. Ser182 (acyl-ester intermediate) is an active-site residue. Catalysis depends on charge relay system residues Asp391 and His416. Over residues 488–505 (STVNSISVSQPGDDQNPQ) the composition is skewed to polar residues. Positions 488-507 (STVNSISVSQPGDDQNPQAE) are disordered.

Belongs to the AB hydrolase superfamily. Lipase family.

In Arabidopsis thaliana (Mouse-ear cress), this protein is Lecithin-cholesterol acyltransferase-like 4 (LCAT4).